The following is a 312-amino-acid chain: Olfactory receptor 8K3 (312 aa).

At 1–25 (MEQHNLTTVNEFILTGITDIAELQA) the chain is on the extracellular side. N5 carries N-linked (GlcNAc...) asparagine glycosylation. The chain crosses the membrane as a helical span at residues 26–46 (PLFALFLMIYVISVMGNLGMI). Residues 47–54 (VLTKLDSR) lie on the Cytoplasmic side of the membrane. The chain crosses the membrane as a helical span at residues 55-75 (LQTPMYFFLRHLAFMDLGYST). Topologically, residues 76-99 (TVGPKMLVNFVVDKNIISYYFCAT) are extracellular. C97 and C189 are joined by a disulfide. Residues 100-120 (QLAFFLVFIGSELFILSAMSY) traverse the membrane as a helical segment. The Cytoplasmic portion of the chain corresponds to 121 to 139 (DLYVAICNPLLYTVIMSRR). The chain crosses the membrane as a helical span at residues 140-160 (VCQVLVAIPYLYCTFISLLVT). Residues 161–197 (IKIFTLSFCGYNVISHFYCDSLPLLPLLCSNTHEIEL) lie on the Extracellular side of the membrane. A helical transmembrane segment spans residues 198–217 (IILIFAAIDLISSLLIVLLS). Topologically, residues 218-236 (YLLILVAILRMNSAGRQKA) are cytoplasmic. The helical transmembrane segment at 237 to 257 (FSTCGAHLTVVIVFYGTLLFM) threads the bilayer. Residues 258–270 (YVQPKSSHSFDTD) are Extracellular-facing. Residues 271-291 (KVASIFYTLVIPMLNPLIYSL) form a helical membrane-spanning segment. Residues 292–312 (RNKDVKYALRRTWNNLCNIFV) lie on the Cytoplasmic side of the membrane.

Belongs to the G-protein coupled receptor 1 family.

It localises to the cell membrane. In terms of biological role, odorant receptor. The sequence is that of Olfactory receptor 8K3 (OR8K3) from Homo sapiens (Human).